A 439-amino-acid polypeptide reads, in one-letter code: Na(+)/H(+) antiporter NhaA 1 (439 aa).

11 helical membrane passes run 14-34, 60-80, 98-118, 127-147, 156-176, 179-199, 213-233, 303-323, 335-355, 375-395, and 408-428; these read ITGG…ANLA, ISLH…FIGL, ALPL…YYFF, GWGI…AMVG, IFLS…IAIF, EQIF…LAVA, IGLI…TIAG, HPIS…GVIV, IVLG…FLFA, IIGT…ISDL, and VAVL…LISA.

It belongs to the NhaA Na(+)/H(+) (TC 2.A.33) antiporter family.

The protein localises to the cell inner membrane. The enzyme catalyses Na(+)(in) + 2 H(+)(out) = Na(+)(out) + 2 H(+)(in). Functionally, na(+)/H(+) antiporter that extrudes sodium in exchange for external protons. The chain is Na(+)/H(+) antiporter NhaA 1 from Psychromonas ingrahamii (strain DSM 17664 / CCUG 51855 / 37).